A 407-amino-acid chain; its full sequence is Pleckstrin homology-like domain family A member 1 (407 aa).

Composition is skewed to basic and acidic residues over residues 1-11 (MRRTPAAERLS) and 54-63 (RSAEDGREQP). Residues 1–67 (MRRTPAAERL…DGREQPAHGS (67 aa)) form a disordered region. In terms of domain architecture, PH spans 149 to 184 (SGCKALKEGVLEKRSDGLLQLWKKKCCILTEEGLLL). 2 disordered regions span residues 188 to 224 (KQVQHQQQQQQQQQPGQGTAEPSQPSGPAVTSLEPPA) and 296 to 407 (QQHL…SNSA). Composition is skewed to low complexity over residues 189 to 204 (QVQHQQQQQQQQQPGQ) and 297 to 319 (QHLVQQQPPQTQQIQPQPQQPQI). The interval 312–348 (PQPQQPQIQPQPQPQIQPQPQPQPQPQPQPQQQPQPQ) is 15 X 2 AA repeats of P-Q. Residues 320 to 344 (QPQPQPQIQPQPQPQPQPQPQPQQQ) are compositionally biased toward pro residues. Positions 354-381 (PHPHPHLYPHPHPHAHSHPHPHPHPHPH) are 11 X 2 AA repeats of P-H. Residues 354–384 (PHPHPHLYPHPHPHAHSHPHPHPHPHPHQLQ) show a composition bias toward basic residues. The segment covering 385 to 395 (HAHQPLHSQPQ) has biased composition (low complexity).

In terms of assembly, interacts with RPL14, EIF3S7 and PABPC4.

The protein resides in the cytoplasm. Its subcellular location is the cytoplasmic vesicle. It localises to the nucleus. It is found in the nucleolus. In terms of biological role, seems to be involved in regulation of apoptosis. May be involved in detachment-mediated programmed cell death. May mediate apoptosis during neuronal development. May be involved in regulation of anti-apoptotic effects of IGF1. May be involved in translational regulation. The chain is Pleckstrin homology-like domain family A member 1 (Phlda1) from Rattus norvegicus (Rat).